A 254-amino-acid polypeptide reads, in one-letter code: DNA repair protein RecO (254 aa).

Belongs to the RecO family.

Functionally, involved in DNA repair and RecF pathway recombination. In Verminephrobacter eiseniae (strain EF01-2), this protein is DNA repair protein RecO.